The sequence spans 83 residues: Small ribosomal subunit protein bS20 (83 aa).

The protein belongs to the bacterial ribosomal protein bS20 family.

Its function is as follows. Binds directly to 16S ribosomal RNA. The sequence is that of Small ribosomal subunit protein bS20 from Flavobacterium psychrophilum (strain ATCC 49511 / DSM 21280 / CIP 103535 / JIP02/86).